The following is a 120-amino-acid chain: UPF0102 protein Caur_2698 (120 aa).

This sequence belongs to the UPF0102 family.

This chain is UPF0102 protein Caur_2698, found in Chloroflexus aurantiacus (strain ATCC 29366 / DSM 635 / J-10-fl).